The primary structure comprises 139 residues: Probable disulfide formation protein C 2 (139 aa).

A helical transmembrane segment spans residues lysine 6–phenylalanine 25. Cysteine 35 and cysteine 38 are joined by a disulfide. 2 consecutive transmembrane segments (helical) span residues tyrosine 40–lysine 59 and tyrosine 66–threonine 83. Cysteines 95 and 101 form a disulfide. A helical transmembrane segment spans residues glycine 110–serine 133.

The protein belongs to the DsbB family. BdbC subfamily.

The protein resides in the cell membrane. Required for disulfide bond formation in some proteins. This Bacillus cereus (strain ATCC 10987 / NRS 248) protein is Probable disulfide formation protein C 2 (bdbC2).